A 248-amino-acid chain; its full sequence is UPF0736 protein ABC2536 (248 aa).

It belongs to the UPF0736 family.

This is UPF0736 protein ABC2536 from Shouchella clausii (strain KSM-K16) (Alkalihalobacillus clausii).